Reading from the N-terminus, the 588-residue chain is Snake venom 5'-nucleotidase (588 aa).

The signal sequence occupies residues 1-40 (MQTPKRRRGAQGCPRSSPSPPLLLLVRAVWFCAALSVAAG). Asp51 and His53 together coordinate Zn(2+). Cys66 and Cys71 are oxidised to a cystine. Zn(2+) is bound by residues Asp99 and Asn131. N-linked (GlcNAc...) asparagine glycosylation occurs at Asn167. The Zn(2+) site is built by His234 and His257. N-linked (GlcNAc...) asparagine glycans are attached at residues Asn347 and Asn361. Disulfide bonds link Cys367-Cys372 and Cys379-Cys401. Arg368 is a binding site for AMP. AMP is bound by residues Asn404 and Arg409. Asn418 carries an N-linked (GlcNAc...) asparagine glycan. Position 432 (Phe432) interacts with AMP. Cys491 and Cys494 are disulfide-bonded. AMP-binding residues include Phe515 and Asp521. The N-linked (GlcNAc...) asparagine glycan is linked to Asn532. Ser564 carries the GPI-anchor amidated serine lipid modification. The propeptide at 565–588 (AGTLFQAQLFLTWGLCVSLLYFIL) is removed in mature form.

Belongs to the 5'-nucleotidase family. The cofactor is Zn(2+). Venom 5'-nucleotidases (or a part thereof) may be released into the venom via exosome-like vesicles. They may be attached via a GPI anchor to the membrane of these vesicles. Soluble forms of 5'-nucleotidase might be released by cleavage of the ectodomain in the exosome-like vesicles or venom gland cells. As to expression, expressed by the venom gland.

The protein localises to the membrane. The catalysed reaction is a ribonucleoside 5'-phosphate + H2O = a ribonucleoside + phosphate. Functionally, hydrolyzes nucleotides into nucleosides. Snake venom 5'-nucleotidases are widely distributed among venomous snake taxa, but there is a lack of information about their biological activities. They have been shown to inhibit platelet aggregation. This effect may be due to the liberation of inhibitory AMP or adenosine by its action on ADP released upon initiation of aggregation. Venom 5'-nucleotidases are also known to synergistically act in vivo with other toxins like ADPases, phospholipases, and disintegrins to exert a more pronounced anti-coagulant effect. The protein is Snake venom 5'-nucleotidase of Crotalus adamanteus (Eastern diamondback rattlesnake).